A 421-amino-acid polypeptide reads, in one-letter code: MLPRLWWLVLWLQPLATLPASAVHDEEAAMSVPRCKSLKETDLIKTSVSDCYCYNQHSQIQWTYMWSTVQVTVTSPGLLNIVYITGSHNCQHTESILSFIKCVTHNFWAPEEAEEITIVFSPYGETVCFSVKPVGRLLPYIVSVSRNIVDFKLFLVFVTGIFLFLYAKTLSQSPVFYYSSGTVLGILMTLVFVLLMAKKHIPKYSTFGALMIGCWFASVYVLCQLMEDLKWLWYGNRMYILGYVVVVGLCSFAACYSHGPLADEGSRDLLMWTLRLFSLALVYTGVAAPQFAYAVLIVLLFSWSLHYLLRAFSYLRWKMRPWFTAEPQVARYLTDDEYREQAEAATARALEELRQACCRPDFPSWLAVSRLQAPKKFAEFVLGASHLSPEEVSTHEKQYGLGGAFLEEQLFSLQTDSLPAS.

An N-terminal signal peptide occupies residues 1–22 (MLPRLWWLVLWLQPLATLPASA). The next 6 helical transmembrane spans lie at 64-84 (YMWS…IVYI), 147-167 (NIVD…FLYA), 175-195 (VFYY…FVLL), 206-226 (TFGA…CQLM), 238-258 (MYIL…CYSH), and 281-301 (LVYT…VLLF).

The protein belongs to the NEMP family. In terms of tissue distribution, in the ovary, highly expressed in somatic cells.

It localises to the nucleus inner membrane. This Mus musculus (Mouse) protein is Nuclear envelope integral membrane protein 2 (Nemp2).